A 1147-amino-acid polypeptide reads, in one-letter code: Disease resistance protein RPP4 (1147 aa).

A TIR domain is found at R11–L175. Residue E86 is part of the active site. The region spanning E189 to N446 is the NB-ARC domain. 18 LRR repeats span residues M548–K573, P584–A606, Y608–L629, G630–I653, L655–A676, M698–P721, R722–A743, E744–L766, G767–I790, L792–A813, T814–L836, E837–C860, L926–T950, L952–L973, H974–L996, S997–S1017, T1018–R1042, and S1044–L1064.

As to quaternary structure, interacts with RSH1.

It catalyses the reaction NAD(+) + H2O = ADP-D-ribose + nicotinamide + H(+). In terms of biological role, TIR-NB-LRR receptor-like protein that confers resistance to the pathogen Hyaloperonospora arabidopsis isolates Emoy2 and Emwa1 (downy mildew disease). Plays a role in the regulation of temperature response during plant growth and survival. The sequence is that of Disease resistance protein RPP4 from Arabidopsis thaliana (Mouse-ear cress).